Consider the following 434-residue polypeptide: CC-adding tRNA nucleotidyltransferase (434 aa).

Residue 19–22 (GAVR) participates in CTP binding. 2 residues coordinate Mg(2+): aspartate 32 and aspartate 34. CTP-binding positions include 90–91 (RD), asparagine 95, 130–139 (DHLRSLRGVR), and arginine 175.

Belongs to the tRNA nucleotidyltransferase/poly(A) polymerase family. Mg(2+) serves as cofactor.

It carries out the reaction a tRNA precursor + 2 CTP = a tRNA with a 3' CC end + 2 diphosphate. Functionally, tRNA nucleotidyltransferase involved in the synthesis of the tRNA CCA terminus. Adds the two cytidine residues to tRNA. This Thermus thermophilus (strain ATCC BAA-163 / DSM 7039 / HB27) protein is CC-adding tRNA nucleotidyltransferase.